The primary structure comprises 248 residues: uncharacterized protein (248 aa).

To M.jannaschii MJ1452.

This is an uncharacterized protein from Methanothermobacter thermautotrophicus (strain ATCC 29096 / DSM 1053 / JCM 10044 / NBRC 100330 / Delta H) (Methanobacterium thermoautotrophicum).